A 318-amino-acid polypeptide reads, in one-letter code: Large ribosomal subunit protein uL10 (318 aa).

Phosphotyrosine is present on Tyr24. Phosphothreonine is present on Thr59. Lys264 participates in a covalent cross-link: Glycyl lysine isopeptide (Lys-Gly) (interchain with G-Cter in ubiquitin). Lys298 participates in a covalent cross-link: Glycyl lysine isopeptide (Lys-Gly) (interchain with G-Cter in SUMO1); alternate. Lys298 is covalently cross-linked (Glycyl lysine isopeptide (Lys-Gly) (interchain with G-Cter in SUMO2); alternate). The segment at 298–318 (KVEAKEESEESDEDMGFGLFD) is disordered. Over residues 303–312 (EESEESDEDM) the composition is skewed to acidic residues. A phosphoserine mark is found at Ser305 and Ser308.

It belongs to the universal ribosomal protein uL10 family. P0 forms a pentameric complex by interaction with dimers of P1 and P2. Identified in a IGF2BP1-dependent mRNP granule complex containing untranslated mRNAs. Interacts with APEX1. Interacts with FMR1. Post-translationally, ubiquitinated at Lys-264 by RNF14 and RNF25 in response to ribosome collisions (ribosome stalling).

The protein localises to the nucleus. Its subcellular location is the cytoplasm. In terms of biological role, ribosomal protein P0 is the functional equivalent of E.coli protein L10. This is Large ribosomal subunit protein uL10 (RPLP0) from Sus scrofa (Pig).